Reading from the N-terminus, the 212-residue chain is Agamous-like MADS-box protein MADS9 (212 aa).

The MADS-box domain occupies 1–61 (MGRGKIEIKR…GKMHEYCSPS (61 aa)). The 87-residue stretch at 84 to 170 (HENLNNELDR…NYIVHHQGMP (87 aa)) folds into the K-box domain.

Expressed during flower development in stamens and petals.

The protein localises to the nucleus. In terms of biological role, probable transcription factor that may play role in specifying stamen and petal organ identity. The protein is Agamous-like MADS-box protein MADS9 of Vitis vinifera (Grape).